The following is a 229-amino-acid chain: C-&gt;U-editing enzyme APOBEC-1 (229 aa).

The 125-residue stretch at 10 to 134 (VDPTLRRRIE…PRNRQGLRDL (125 aa)) folds into the CMP/dCMP-type deaminase domain. Residue His-61 participates in Zn(2+) binding. The active-site Proton donor is Glu-63. 2 residues coordinate Zn(2+): Cys-93 and Cys-96.

The protein belongs to the cytidine and deoxycytidylate deaminase family. As to quaternary structure, homodimer. Interacts with A1CF; form an mRNA editing complex. Interacts with RBM47; form an mRNA editing complex. Found in a complex with CELF2/CUGBP2 and A1CF. Interacts with HNRPAB. Interacts with SYNCRIP. Zn(2+) is required as a cofactor. In terms of tissue distribution, expressed in the liver as well as small intestine.

The protein resides in the cytoplasm. It localises to the nucleus. The catalysed reaction is a cytidine in mRNA + H2O + H(+) = a uridine in mRNA + NH4(+). It catalyses the reaction cytidine(6666) in apoB mRNA + H2O + H(+) = uridine(6666) in apoB mRNA + NH4(+). Functionally, cytidine deaminase catalyzing the cytidine to uridine postranscriptional editing of a variety of mRNAs. Form complexes with cofactors that confer differential editing activity and selectivity. Responsible for the postranscriptional editing of a CAA codon for Gln to a UAA codon for stop in the apolipoprotein B mRNA. Also involved in CGA (Arg) to UGA (Stop) editing in the NF1 mRNA. May also play a role in the epigenetic regulation of gene expression by participating in DNA demethylation. The protein is C-&gt;U-editing enzyme APOBEC-1 of Rattus norvegicus (Rat).